The chain runs to 209 residues: BAG family molecular chaperone regulator 1 (209 aa).

One can recognise a Ubiquitin-like domain in the interval 7–84 (CSSVQTIVDI…IIVMGGKNAM (78 aa)). The 87-residue stretch at 107-193 (TYDVNLKDVA…TLLNQNDALL (87 aa)) folds into the BAG domain.

As to quaternary structure, homodimer or homotetramer.

May inhibit the chaperone activity of HSP70/HSC70 by promoting substrate release in an ATP-dependent manner. The chain is BAG family molecular chaperone regulator 1 (bag-1) from Caenorhabditis briggsae.